The chain runs to 265 residues: Energy-coupling factor transporter transmembrane protein EcfT (265 aa).

6 helical membrane passes run 26 to 46 (MVFVFIMMILIFLMNNWQTYA), 47 to 67 (VGIILIFIILKASNLSFMFLF), 72 to 92 (PILFLLIFTLLMHIFLTKGGA), 107 to 127 (VIMGIMISLRFILIIFLTTIM), 152 to 172 (LPVHELALMMSIALRFIPTLM), and 243 to 263 (HTYDTLSLLTLIPITLLILYL).

It belongs to the energy-coupling factor EcfT family. In terms of assembly, forms a stable energy-coupling factor (ECF) transporter complex composed of 2 membrane-embedded substrate-binding proteins (S component), 2 ATP-binding proteins (A component) and 2 transmembrane proteins (T component). May be able to interact with more than 1 S component at a time.

It localises to the cell membrane. In terms of biological role, transmembrane (T) component of an energy-coupling factor (ECF) ABC-transporter complex. Unlike classic ABC transporters this ECF transporter provides the energy necessary to transport a number of different substrates. The chain is Energy-coupling factor transporter transmembrane protein EcfT from Macrococcus caseolyticus (strain JCSC5402) (Macrococcoides caseolyticum).